A 193-amino-acid chain; its full sequence is Acyl carrier protein phosphodiesterase (193 aa).

The protein belongs to the AcpH family.

The enzyme catalyses holo-[ACP] + H2O = apo-[ACP] + (R)-4'-phosphopantetheine + H(+). Its function is as follows. Converts holo-ACP to apo-ACP by hydrolytic cleavage of the phosphopantetheine prosthetic group from ACP. This is Acyl carrier protein phosphodiesterase from Serratia proteamaculans (strain 568).